The following is a 407-amino-acid chain: Phosphopentomutase (407 aa).

Positions 10, 306, 311, 347, 348, and 359 each coordinate Mn(2+).

The protein belongs to the phosphopentomutase family. It depends on Mn(2+) as a cofactor.

The protein resides in the cytoplasm. It carries out the reaction 2-deoxy-alpha-D-ribose 1-phosphate = 2-deoxy-D-ribose 5-phosphate. The catalysed reaction is alpha-D-ribose 1-phosphate = D-ribose 5-phosphate. It participates in carbohydrate degradation; 2-deoxy-D-ribose 1-phosphate degradation; D-glyceraldehyde 3-phosphate and acetaldehyde from 2-deoxy-alpha-D-ribose 1-phosphate: step 1/2. In terms of biological role, isomerase that catalyzes the conversion of deoxy-ribose 1-phosphate (dRib-1-P) and ribose 1-phosphate (Rib-1-P) to deoxy-ribose 5-phosphate (dRib-5-P) and ribose 5-phosphate (Rib-5-P), respectively. The polypeptide is Phosphopentomutase (Yersinia pestis bv. Antiqua (strain Antiqua)).